Consider the following 263-residue polypeptide: tRNA (guanine-N(7)-)-methyltransferase (263 aa).

The segment at 1–33 is disordered; the sequence is MSDHGRMHSTGSEVAAPVAPDPDTEGVHPHFNR. Residues Glu-89, Glu-114, Asp-146, and Asp-169 each contribute to the S-adenosyl-L-methionine site. Asp-169 is an active-site residue. Residues Lys-173, Asp-205, and 242–245 contribute to the substrate site; that span reads TKYE.

Belongs to the class I-like SAM-binding methyltransferase superfamily. TrmB family.

It catalyses the reaction guanosine(46) in tRNA + S-adenosyl-L-methionine = N(7)-methylguanosine(46) in tRNA + S-adenosyl-L-homocysteine. Its pathway is tRNA modification; N(7)-methylguanine-tRNA biosynthesis. Its function is as follows. Catalyzes the formation of N(7)-methylguanine at position 46 (m7G46) in tRNA. This Mycolicibacterium gilvum (strain PYR-GCK) (Mycobacterium gilvum (strain PYR-GCK)) protein is tRNA (guanine-N(7)-)-methyltransferase.